The primary structure comprises 128 residues: Holo-[acyl-carrier-protein] synthase (128 aa).

Mg(2+) contacts are provided by Asp8 and Glu59.

The protein belongs to the P-Pant transferase superfamily. AcpS family. Requires Mg(2+) as cofactor.

It localises to the cytoplasm. The catalysed reaction is apo-[ACP] + CoA = holo-[ACP] + adenosine 3',5'-bisphosphate + H(+). Its function is as follows. Transfers the 4'-phosphopantetheine moiety from coenzyme A to a Ser of acyl-carrier-protein. This chain is Holo-[acyl-carrier-protein] synthase, found in Rickettsia typhi (strain ATCC VR-144 / Wilmington).